The following is a 411-amino-acid chain: Adenylosuccinate synthetase (411 aa).

GTP is bound by residues 11–17 (GDEGKGK) and 39–41 (GHT). Catalysis depends on D12, which acts as the Proton acceptor. Mg(2+) contacts are provided by D12 and G39. IMP-binding positions include 12-15 (DEGK), 37-40 (NAGH), T121, R135, Q215, T230, and R294. Catalysis depends on H40, which acts as the Proton donor. 290–296 (TTTKRPR) is a binding site for substrate. Residues R296, 322-324 (KLD), and 400-402 (STS) contribute to the GTP site.

This sequence belongs to the adenylosuccinate synthetase family. Homodimer. Requires Mg(2+) as cofactor.

The protein resides in the cytoplasm. It catalyses the reaction IMP + L-aspartate + GTP = N(6)-(1,2-dicarboxyethyl)-AMP + GDP + phosphate + 2 H(+). The protein operates within purine metabolism; AMP biosynthesis via de novo pathway; AMP from IMP: step 1/2. Plays an important role in the de novo pathway of purine nucleotide biosynthesis. Catalyzes the first committed step in the biosynthesis of AMP from IMP. The polypeptide is Adenylosuccinate synthetase (Helicobacter pylori (strain ATCC 700392 / 26695) (Campylobacter pylori)).